The chain runs to 82 residues: Sulfur carrier protein TusA (82 aa).

The active-site Cysteine persulfide intermediate is Cys-19.

This sequence belongs to the sulfur carrier protein TusA family.

It localises to the cytoplasm. In terms of biological role, sulfur carrier protein which probably makes part of a sulfur-relay system. The sequence is that of Sulfur carrier protein TusA from Vibrio campbellii (strain ATCC BAA-1116).